An 88-amino-acid chain; its full sequence is MPRPALRSRSLRRVYVKLPSGKTVIHYERKRNDIAICAICKKPLHGVKTNFLHKYSKSEKRPERPFGGYLCSSCLTQLIKATVRQQLQ.

Belongs to the eukaryotic ribosomal protein eL34 family.

This Saccharolobus solfataricus (strain ATCC 35092 / DSM 1617 / JCM 11322 / P2) (Sulfolobus solfataricus) protein is Large ribosomal subunit protein eL34.